A 193-amino-acid polypeptide reads, in one-letter code: Imidazoleglycerol-phosphate dehydratase (193 aa).

It belongs to the imidazoleglycerol-phosphate dehydratase family.

It is found in the cytoplasm. The catalysed reaction is D-erythro-1-(imidazol-4-yl)glycerol 3-phosphate = 3-(imidazol-4-yl)-2-oxopropyl phosphate + H2O. The protein operates within amino-acid biosynthesis; L-histidine biosynthesis; L-histidine from 5-phospho-alpha-D-ribose 1-diphosphate: step 6/9. This Metallosphaera sedula (strain ATCC 51363 / DSM 5348 / JCM 9185 / NBRC 15509 / TH2) protein is Imidazoleglycerol-phosphate dehydratase.